The primary structure comprises 822 residues: MLEGTVDYDPLEDITNILFSKESLNNIDELISITRSYKKQLQEDILKEENELKEHPKNSAEIEASLRKVFQDFKETQDVSASTELTISNLTEGISYLDIAKKNLTHSLTLFQNLKILTDSYIQCNELLSQGSFKKMVSPYKIMCSLAENTFISYKSLDEINYLLSSISRLKGDTLSKIKQNYNALFSGGNISEHDTALTMELREGACELLDCDTSTRAQMIDWCLDKLLFEMKEIFRVDDEAGSLENLSRRYIYFKKILNNFNSKFADYFLKDWEMAVRLTTTFYHITHKDLQTLLKREFKDKNPSIDLFMTALQSTLDFEKYIDVRFSKKIKEPKLSSCFEPYLTLWVSHQNQMMEKKFLSYMSEPKYPSNETESLVLPSSADLFRTYRSVLTQTLELIDNNANDSILTSLANFFSRWLQTYSQKILLPLLLPDNIEVQDKLEAAKYTVLLINTADYCATTIDQLEDKLSEFSGNREKLANSFTKTKNIYDDLLAKGTSFLLNRVIPLDLNFVWREFINNDWSNAAIEDYSRYMVTLKSVLKMPALTDASIKQQQEQPSTLAFILSQFNRDVYKWNFLDKVIDIITTNFVSNTIRLLQPVPPFSLAGSKRKFETRTVVNIGEQLLLDLELLKEIFHTLPESVSNDSDLRENTSYKRVKRHADNNIDQLLKFIKLLMAPLDSADDYYETYSKLTNNNPDSAVWSFVLALKGIPWDLALWKKLWSAYNLETDDTDEGSRPDSNRDLFIFKWDKVLLGQFENNLARMQDPNWSKFVRQDLKISPPVMKRIVSTPQIQQQKEEQKKQSLSVKDFVSHSRFFNRGT.

Coiled coils occupy residues 34-58 (TRSY…HPKN) and 460-484 (ATTI…ANSF).

It belongs to the VPS53 family. As to quaternary structure, component of the Golgi-associated retrograde protein (GARP) complex, also called VFT (VPS fifty-three) complex, composed of VPS51, VPS52, VPS53 and VPS54. Also interacts with TLG1, YPT6 and ARL1.

The protein resides in the golgi apparatus. Its subcellular location is the trans-Golgi network membrane. It is found in the endosome membrane. Its function is as follows. Involved in retrograde transport from early and late endosomes to late Golgi by linking the vesicle through the t-SNARE TGL1 to the Golgi, leading to the membrane fusion between late Golgi and endosomal vesicles. In Saccharomyces cerevisiae (strain ATCC 204508 / S288c) (Baker's yeast), this protein is Vacuolar protein sorting-associated protein 53 (VPS53).